Here is a 134-residue protein sequence, read N- to C-terminus: Phosphoribosyl-AMP cyclohydrolase (134 aa).

Aspartate 78 is a binding site for Mg(2+). Cysteine 79 provides a ligand contact to Zn(2+). Mg(2+)-binding residues include aspartate 80 and aspartate 82. Zn(2+)-binding residues include cysteine 96 and cysteine 103.

This sequence belongs to the PRA-CH family. As to quaternary structure, homodimer. It depends on Mg(2+) as a cofactor. The cofactor is Zn(2+).

It is found in the cytoplasm. It catalyses the reaction 1-(5-phospho-beta-D-ribosyl)-5'-AMP + H2O = 1-(5-phospho-beta-D-ribosyl)-5-[(5-phospho-beta-D-ribosylamino)methylideneamino]imidazole-4-carboxamide. Its pathway is amino-acid biosynthesis; L-histidine biosynthesis; L-histidine from 5-phospho-alpha-D-ribose 1-diphosphate: step 3/9. In terms of biological role, catalyzes the hydrolysis of the adenine ring of phosphoribosyl-AMP. The sequence is that of Phosphoribosyl-AMP cyclohydrolase from Cupriavidus taiwanensis (strain DSM 17343 / BCRC 17206 / CCUG 44338 / CIP 107171 / LMG 19424 / R1) (Ralstonia taiwanensis (strain LMG 19424)).